A 651-amino-acid polypeptide reads, in one-letter code: Kinesin-like protein KIF22-A (651 aa).

Positions 31 to 359 constitute a Kinesin motor domain; the sequence is RVRVAVRLRP…LNFAAKSKQI (329 aa). 116 to 123 provides a ligand contact to ATP; the sequence is GPTGAGKT. The segment at 366 to 413 is disordered; it reads QETTQTVVQPAMKRPREETGHIAGSQKRKKSKNDSTESSPNSSMDTAG. Residues 401 to 410 show a composition bias toward polar residues; that stretch reads TESSPNSSMD. The stretch at 452-498 forms a coiled coil; sequence KRERMALLKKWEESQMEIERLKEKQKELEQKAMEAEARLEKSNNSDL. The Important for regulated proteolytic degradation signature appears at 561–564; the sequence is GLEN.

It belongs to the TRAFAC class myosin-kinesin ATPase superfamily. Kinesin family. In terms of processing, ubiquitinated, leading to its subsequent proteasomal degradation.

It localises to the nucleus. The protein resides in the cytoplasm. It is found in the cytoskeleton. Its function is as follows. Kinesin family member that is involved in spindle formation and the movements of chromosomes during mitosis and meiosis. Binds to microtubules and to DNA. This chain is Kinesin-like protein KIF22-A (kif22-a), found in Xenopus laevis (African clawed frog).